The chain runs to 187 residues: MEMMIKKRIKQVKKGDQDAFADIVDIYKDKIYQLCYRMLGNVHEAEDIAQEAFIRAYVNIDSFDINRKFSTWLYRIATNLTIDRIRKKKPDYYLDAEVAGTEGLTMYSQIVADGVLPEDAVVSLELSNTIQQKILKLPDKYRTVIVLKYIDELSLIEIGEILNIPVGTVKTRIHRGREALRKQLRDL.

A sigma-70 factor domain-2 region spans residues 3–95 (MMIKKRIKQV…RKKKPDYYLD (93 aa)). A Polymerase core binding motif is present at residues 47–50 (DIAQ). The sigma-70 factor domain-4 stretch occupies residues 125 to 187 (ELSNTIQQKI…EALRKQLRDL (63 aa)). Residues 166-184 (VGTVKTRIHRGREALRKQL) constitute a DNA-binding region (H-T-H motif).

Belongs to the sigma-70 factor family. ECF subfamily. Interacts transiently with the RNA polymerase catalytic core formed by RpoA, RpoB, RpoC and RpoZ (2 alpha, 1 beta, 1 beta' and 1 omega subunit) to form the RNA polymerase holoenzyme that can initiate transcription. Forms a heterodimer with cognate anti-sigma factor RsiW, which prevents it from binding to the -10 and -35 promoter elements.

Extracytoplasmic function (ECF) sigma factors are held in an inactive form by a cognate anti-sigma factor (RsiW for this protein) until released by regulated membrane proteolysis (RIP). RIP occurs when an extracytoplasmic signal (envelope stress) triggers a concerted proteolytic cascade to transmit information and elicit cellular responses. The anti-sigma factor RsiW is a membrane protein, binding sigma-W in the cytoplasm. RsiW is first cut extracytoplasmically (site-1 protease, S1P, by PrsW), then within the membrane itself (site-2 protease, S2P, by RasP), while cytoplasmic proteases (predominantly ClpX-ClpP) finish degrading the regulatory protein, liberating sigma-W. Sigma factors are initiation factors that promote the attachment of RNA polymerase (RNAP) to specific initiation sites and are then released. Sigma-W controls genes involved in response to cell envelope stress such as antimicrobial peptides, alkaline pH, transport processes and detoxification. The sequence is that of ECF RNA polymerase sigma factor SigW (sigW) from Bacillus subtilis (strain 168).